We begin with the raw amino-acid sequence, 110 residues long: PHD finger-like domain-containing protein 5A (110 aa).

At A2 the chain carries N-acetylalanine. Position 3 is an N6-acetyllysine (K3). Zn(2+) contacts are provided by C11, C23, C26, C30, C33, C46, C49, C58, C61, C72, and C75. An interaction with SF3B1 and SF3B3 region spans residues 35 to 51; the sequence is SYVRPCTLVRICDECNY. The segment at 79–82 is interaction with SF3B3; that stretch reads EKDR. Residue C85 coordinates Zn(2+). At S94 the chain carries Phosphoserine.

Belongs to the PHF5 family. As to quaternary structure, component of the 17S U2 SnRNP complex, a ribonucleoprotein complex that contains small nuclear RNA (snRNA) U2 and a number of specific proteins. Part of the SF3B subcomplex of the 17S U2 SnRNP complex. SF3B associates with the splicing subcomplex SF3A and a 12S RNA unit to form the U2 small nuclear ribonucleoproteins complex (U2 snRNP). Within the SF3B complex interacts directly with SF3B1 and SF3B3. Component of the minor spliceosome, which splices U12-type introns. Within this complex, interacts with CRIPT. Interacts (via N-terminus) with U2AF1 and SRSF5; acts to bridge the two. Interacts (via C-terminus) with EP400 and DDX1; acts to bridge the two. Interacts with the PAF1 complex (PAF1C) composed of CDC73, PAF1, LEO1, CTR9, RTF1 and SKIC8. Within the PAF1C interacts directly with CDC73 and SKIC8. Interacts with RNA polymerase II. In terms of tissue distribution, expressed in primary spermatocytes (at protein level). Ubiquitously expressed in pre- and postnatal tissues. Highly expressed in pluripotent embryonic stem cells (ESCs) (at protein level) and induced pluripotent stem cells (iPSCs).

The protein resides in the nucleus. The protein localises to the nucleus speckle. Component of the 17S U2 SnRNP complex of the spliceosome, a large ribonucleoprotein complex that removes introns from transcribed pre-mRNAs. The 17S U2 SnRNP complex (1) directly participates in early spliceosome assembly and (2) mediates recognition of the intron branch site during pre-mRNA splicing by promoting the selection of the pre-mRNA branch-site adenosine, the nucleophile for the first step of splicing. Within the 17S U2 SnRNP complex, PHF5A is part of the SF3B subcomplex, which is required for 'A' complex assembly formed by the stable binding of U2 snRNP to the branchpoint sequence in pre-mRNA. Sequence independent binding of SF3A and SF3B subcomplexes upstream of the branch site is essential, it may anchor U2 snRNP to the pre-mRNA. Also acts as a component of the minor spliceosome, which is involved in the splicing of U12-type introns in pre-mRNAs. Also involved in elongation by RNA polymerase II as part of the PAF1 complex (PAF1C). PAF1C is required for maintenance of embryonic stem cell (ESC) self-renewal and cellular reprogramming of stem cells. Maintains pluripotency by recruiting and stabilizing PAF1C on pluripotency genes loci, and by regulating the expression of the pluripotency genes. Regulates the deposition of elongation-associated histone modifications, including dimethylated histone H3 'Lys-79' (H3K79me2) and trimethylated histone H3 'Lys-36' (H3K36me3), on PAF1C targets, self-renewal and pluripotency genes. Regulates RNA polymerase II promoter-proximal pause release of the PAF1C targets and self-renewal genes, and the levels of elongating ('Ser-2' phosphorylated) RNA polymerase II in their gene bodies. Regulates muscle specification in adult stem cells by stabilizing PAF1C in chromatin to promote myogenic differentiation. Acts as a transcriptional regulator by binding to the GJA1/Cx43 promoter and enhancing its up-regulation by ESR1/ER-alpha. This Mus musculus (Mouse) protein is PHD finger-like domain-containing protein 5A (Phf5a).